Here is a 1042-residue protein sequence, read N- to C-terminus: Diacylglycerol lipase-alpha (1042 aa).

Topologically, residues 1-22 (MPGIVVFRRRWSVGSDDLVLPA) are cytoplasmic. A helical membrane pass occupies residues 23 to 43 (IFLFLLHTTWFVILSVVLFGL). Over 44–60 (VYNPHEACSLNLVDHGR) the chain is Extracellular. Residues 61–81 (GYLGILLSCMIAEMAIIWLSM) form a helical membrane-spanning segment. The Cytoplasmic portion of the chain corresponds to 82–101 (RGGILYTEPRDSMQYVLYVR). A helical membrane pass occupies residues 102 to 122 (LAILVIEFIYAIVGIVWLTQY). The Extracellular segment spans residues 123-136 (YTSCNDLTAKNVTL). Asn133 carries an N-linked (GlcNAc...) asparagine glycan. A helical membrane pass occupies residues 137 to 157 (GMVVCNWVVILSVCITVLCVF). Over 158 to 1042 (DPTGRTFVKL…KQDELVISAR (885 aa)) the chain is Cytoplasmic. Catalysis depends on charge relay system residues Ser472 and Asp524. Phosphoserine is present on residues Ser727, Ser729, Ser732, Ser743, Ser782, Ser784, Ser806, Ser808, Ser833, Ser847, and Ser952. The disordered stretch occupies residues 846 to 903 (LSKHSQDTQPLEAALGSGGVTPERPPSAAANDEEEEVGGGGGGPASRGELALHNGRLG). A disordered region spans residues 1014-1042 (LAADKIRTSTPTGHGASPAKQDELVISAR). The residue at position 1023 (Thr1023) is a Phosphothreonine.

It belongs to the AB hydrolase superfamily. Lipase family. As to quaternary structure, interacts (via C-terminal) with CAMK2A; leading to the phosphorylation and inhibition of DAGLA enzymatic activity. Interacts (via PPXXF motif) with HOMER1 and HOMER2; this interaction is required for DAGLA membrane localization. Ca(2+) serves as cofactor. In terms of processing, phosphorylated at Ser-782 and Ser-808 by CAMK2A; phosphorylation by CAMK2A inhibits diacylglycerol lipase activity. In terms of tissue distribution, highly expressed in brain and pancreas.

The protein localises to the cell membrane. It localises to the postsynaptic density membrane. The protein resides in the early endosome membrane. It is found in the cell projection. Its subcellular location is the dendritic spine membrane. It carries out the reaction a 1,2-diacyl-sn-glycerol + H2O = a 2-acylglycerol + a fatty acid + H(+). The catalysed reaction is 1-octadecanoyl-2-(5Z,8Z,11Z,14Z-eicosatetraenoyl)-sn-glycerol + H2O = 2-(5Z,8Z,11Z,14Z-eicosatetraenoyl)-glycerol + octadecanoate + H(+). It catalyses the reaction 1,2-di-(9Z-octadecenoyl)-sn-glycerol + H2O = 2-(9Z-octadecenoyl)-glycerol + (9Z)-octadecenoate + H(+). The enzyme catalyses 1-(9Z-octadecenoyl)-2-(5Z,8Z,11Z,14Z-eicosatetraenoyl)-sn-glycerol + H2O = 2-(5Z,8Z,11Z,14Z-eicosatetraenoyl)-glycerol + (9Z)-octadecenoate + H(+). It carries out the reaction 1-(9Z-octadecenoyl)-2-octadecanoyl-sn-glycerol + H2O = 2-octadecanoylglycerol + (9Z)-octadecenoate + H(+). The catalysed reaction is 1-(9Z-octadecenoyl)-2-(9Z,12Z-octadecadienoyl)-sn-glycerol + H2O = 2-(9Z,12Z-octadecadienoyl)-glycerol + (9Z)-octadecenoate + H(+). It catalyses the reaction 1-(9Z-octadecenoyl)-2-O-(5Z,8Z,11Z,14Z-eicosatetraenyl)-sn-glycerol + H2O = 2-O-(5Z,8Z,11Z,14Z)-eicosatetraenylglycerol + (9Z)-octadecenoate + H(+). Inhibited by 1,2,3-triazole urea covalent inhibitors KT172, DH376 and DO34. Inhibited by p-hydroxy-mercuri-benzoate and HgCl(2), but not to PMSF. Also inhibited by RHC80267. Diacylglycerol lipase activity is inhibited by the phosphorylation of Ser-782 and Ser-808 by CAMK2A. Functionally, serine hydrolase that hydrolyzes arachidonic acid-esterified diacylglycerols (DAGs) to produce the principal endocannabinoid, 2-arachidonoylglycerol (2-AG). Preferentially hydrolyzes sn-1 fatty acids from diacylglycerols (DAG) that contain arachidonic acid (AA) esterified at the sn-2 position to biosynthesize 2-AG. Has negligible activity against other lipids including monoacylglycerols and phospholipids. Plays a key role in regulating 2-AG signaling in the central nervous system (CNS). Regulates 2-AG involved in retrograde suppression at central synapses. Supports axonal growth during development and adult neurogenesis. Plays a role for eCB signaling in the physiological regulation of anxiety and depressive behaviors. Also regulates neuroinflammatory responses in the brain, in particular, LPS-induced microglial activation. This chain is Diacylglycerol lipase-alpha (DAGLA), found in Homo sapiens (Human).